Consider the following 411-residue polypeptide: Phosphoglycerate kinase (411 aa).

Residues 22-24, Arg-37, 60-63, Arg-123, and Arg-165 each bind substrate; these read DFN and HLSR. ATP is bound by residues Lys-216, Glu-339, and 366–369; that span reads GGDS.

The protein belongs to the phosphoglycerate kinase family. In terms of assembly, monomer.

The protein localises to the cytoplasm. The enzyme catalyses (2R)-3-phosphoglycerate + ATP = (2R)-3-phospho-glyceroyl phosphate + ADP. Its pathway is carbohydrate degradation; glycolysis; pyruvate from D-glyceraldehyde 3-phosphate: step 2/5. The chain is Phosphoglycerate kinase (pgk) from Mycoplasma genitalium (strain ATCC 33530 / DSM 19775 / NCTC 10195 / G37) (Mycoplasmoides genitalium).